The primary structure comprises 161 residues: Nucleotide-binding protein GM21_0633 (161 aa).

This sequence belongs to the YajQ family.

In terms of biological role, nucleotide-binding protein. The sequence is that of Nucleotide-binding protein GM21_0633 from Geobacter sp. (strain M21).